The chain runs to 56 residues: RPYACELTVAAGPCLRFSAFYYSKGANQCYPFNYSGCGGNANRFSTNQKCRRTCVV.

3 cysteine pairs are disulfide-bonded: Cys5/Cys54, Cys14/Cys37, and Cys29/Cys50. Positions 5 to 56 (CELTVAAGPCLRFSAFYYSKGANQCYPFNYSGCGGNANRFSTNQKCRRTCVV) constitute a BPTI/Kunitz inhibitor domain.

The protein belongs to the venom Kunitz-type family. In terms of tissue distribution, expressed by the venom gland.

It is found in the secreted. In terms of biological role, interacts with vasopressin V2 receptor (V2R/AVPR2), probably in a selective manner. Inhibits vasopressin binding human V2R in the nanomolar range (Ki=45.1 nM), and also potently inhibits vasopressin-induced cAMP production (IC(50)=111 nM). In vivo, intraperitoneal injection of this protein into rats increases diuresis, without any loss of electrolytes. In Dendroaspis viridis (Western green mamba), this protein is Mambaquaretin-9.